An 84-amino-acid chain; its full sequence is Exendin-2-long (84 aa).

The first 23 residues, methionine 1–glutamine 23, serve as a signal peptide directing secretion. The propeptide occupies methionine 24–serine 44.

The protein belongs to the glucagon family. An amidated Pro-81 is described. Such an amidation is however not compatible with the sequence displayed. Indeed cDNAs do not encode a Gly that could serve as substrate for peptide alpha-amidation. As to expression, expressed by the venom gland. Not expressed in the pancreas, liver, stomach, small intestine, lung, heart, kidney, spleen, ovary, and brain.

Its subcellular location is the secreted. Has vasoactive intestinal peptide(VIP)/secretin-like biological activity. Interacts with rat and human VIP receptors 1 (VIPR1) and 2 (VIPR2), with the highest affinity for the human VIPR2. Induces hypotension that is mediated by relaxation of cardiac smooth muscle. This vasodilation may not be transduced by VIP or PACAP receptors. The polypeptide is Exendin-2-long (Heloderma suspectum (Gila monster)).